Here is a 497-residue protein sequence, read N- to C-terminus: Bifunctional protein GlmU (497 aa).

The tract at residues 1–241 (MSPETIGPAA…RWQVEGANDR (241 aa)) is pyrophosphorylase. UDP-N-acetyl-alpha-D-glucosamine is bound by residues 14-17 (LAAG), Lys28, Gln81, 86-87 (GT), 112-114 (YGD), Gly151, Glu166, Asn181, and Asn239. Mg(2+) is bound at residue Asp114. Residue Asn239 coordinates Mg(2+). A linker region spans residues 242-262 (IQLSALAAEHNRRIIESWMRA). The N-acetyltransferase stretch occupies residues 263 to 497 (GVTVVDPATT…QATIEEGKQA (235 aa)). The UDP-N-acetyl-alpha-D-glucosamine site is built by Arg344 and Lys362. His374 acts as the Proton acceptor in catalysis. The UDP-N-acetyl-alpha-D-glucosamine site is built by Tyr377 and Asn388. Acetyl-CoA contacts are provided by residues 397 to 398 (NY), Ser416, and Ala434.

The protein in the N-terminal section; belongs to the N-acetylglucosamine-1-phosphate uridyltransferase family. This sequence in the C-terminal section; belongs to the transferase hexapeptide repeat family. Homotrimer. Mg(2+) serves as cofactor.

The protein resides in the cytoplasm. It catalyses the reaction alpha-D-glucosamine 1-phosphate + acetyl-CoA = N-acetyl-alpha-D-glucosamine 1-phosphate + CoA + H(+). The enzyme catalyses N-acetyl-alpha-D-glucosamine 1-phosphate + UTP + H(+) = UDP-N-acetyl-alpha-D-glucosamine + diphosphate. The protein operates within nucleotide-sugar biosynthesis; UDP-N-acetyl-alpha-D-glucosamine biosynthesis; N-acetyl-alpha-D-glucosamine 1-phosphate from alpha-D-glucosamine 6-phosphate (route II): step 2/2. It functions in the pathway nucleotide-sugar biosynthesis; UDP-N-acetyl-alpha-D-glucosamine biosynthesis; UDP-N-acetyl-alpha-D-glucosamine from N-acetyl-alpha-D-glucosamine 1-phosphate: step 1/1. It participates in bacterial outer membrane biogenesis; LPS lipid A biosynthesis. Its function is as follows. Catalyzes the last two sequential reactions in the de novo biosynthetic pathway for UDP-N-acetylglucosamine (UDP-GlcNAc). The C-terminal domain catalyzes the transfer of acetyl group from acetyl coenzyme A to glucosamine-1-phosphate (GlcN-1-P) to produce N-acetylglucosamine-1-phosphate (GlcNAc-1-P), which is converted into UDP-GlcNAc by the transfer of uridine 5-monophosphate (from uridine 5-triphosphate), a reaction catalyzed by the N-terminal domain. The chain is Bifunctional protein GlmU from Paenarthrobacter aurescens (strain TC1).